The sequence spans 1503 residues: E3 ubiquitin-protein ligase listerin (1503 aa).

HEAT repeat units follow at residues 52–89, 93–129, 133–170, 280–318, 323–345, 346–384, 552–589, 640–663, 664–700, 845–882, 1022–1065, 1078–1117, 1141–1183, and 1302–1340; these read SGID…ETSS, CYEH…KLEK, KGLK…ADKK, LNTP…SAQF, SLQN…HWRV, LQHF…NLPW, GDIV…TGGS, AENV…NEAE, KNVL…DFNS, LEKR…LDDS, TLFI…RMFR, RTLL…SLLE, AAAK…VMIS, and FKSI…KLLI. The RING-type zinc-finger motif lies at 1446–1499; the sequence is CTICMMTVHQQTNQLPKVKCKQCKNRFHSNCLVSSFHTYKWFESSNQSTCPLCR.

Belongs to the LTN1 family. Component of the ribosome quality control complex (RQC), composed of at least the E3 ubiquitin ligase ltn1 and nemf. The complex probably also contains tcf25 as well as vcp/p97 and its ubiquitin-binding cofactors. RQC forms a stable complex with 60S ribosomal subunits.

It is found in the cytoplasm. It localises to the cytosol. The enzyme catalyses S-ubiquitinyl-[E2 ubiquitin-conjugating enzyme]-L-cysteine + [acceptor protein]-L-lysine = [E2 ubiquitin-conjugating enzyme]-L-cysteine + N(6)-ubiquitinyl-[acceptor protein]-L-lysine.. It functions in the pathway protein modification; protein ubiquitination. E3 ubiquitin-protein ligase. Component of the ribosome quality control complex (RQC), a ribosome-associated complex that mediates ubiquitination and extraction of incompletely synthesized nascent chains for proteasomal degradation. Ubiquitination leads to vcp/p97 recruitment for extraction and degradation of the incomplete translation product. This is E3 ubiquitin-protein ligase listerin from Caenorhabditis briggsae.